The chain runs to 786 residues: Endonuclease MutS2 (786 aa).

335 to 342 lines the ATP pocket; that stretch reads GPNTGGKT. The 76-residue stretch at 711-786 folds into the Smr domain; sequence LDLRGERFEN…GLGVTVVELK (76 aa).

Belongs to the DNA mismatch repair MutS family. MutS2 subfamily. As to quaternary structure, homodimer. Binds to stalled ribosomes, contacting rRNA.

Functionally, endonuclease that is involved in the suppression of homologous recombination and thus may have a key role in the control of bacterial genetic diversity. Acts as a ribosome collision sensor, splitting the ribosome into its 2 subunits. Detects stalled/collided 70S ribosomes which it binds and splits by an ATP-hydrolysis driven conformational change. Acts upstream of the ribosome quality control system (RQC), a ribosome-associated complex that mediates the extraction of incompletely synthesized nascent chains from stalled ribosomes and their subsequent degradation. Probably generates substrates for RQC. This is Endonuclease MutS2 from Bacillus thuringiensis (strain Al Hakam).